The primary structure comprises 234 residues: Urease accessory protein UreF (234 aa).

This sequence belongs to the UreF family. UreD, UreF and UreG form a complex that acts as a GTP-hydrolysis-dependent molecular chaperone, activating the urease apoprotein by helping to assemble the nickel containing metallocenter of UreC. The UreE protein probably delivers the nickel.

Its subcellular location is the cytoplasm. Its function is as follows. Required for maturation of urease via the functional incorporation of the urease nickel metallocenter. The chain is Urease accessory protein UreF from Azoarcus sp. (strain BH72).